The primary structure comprises 246 residues: UPF0736 protein GK0808 (246 aa).

Belongs to the UPF0736 family.

The chain is UPF0736 protein GK0808 from Geobacillus kaustophilus (strain HTA426).